Consider the following 125-residue polypeptide: Large ribosomal subunit protein uL22 (125 aa).

It belongs to the universal ribosomal protein uL22 family. Part of the 50S ribosomal subunit.

Its function is as follows. This protein binds specifically to 23S rRNA; its binding is stimulated by other ribosomal proteins, e.g. L4, L17, and L20. It is important during the early stages of 50S assembly. It makes multiple contacts with different domains of the 23S rRNA in the assembled 50S subunit and ribosome. The globular domain of the protein is located near the polypeptide exit tunnel on the outside of the subunit, while an extended beta-hairpin is found that lines the wall of the exit tunnel in the center of the 70S ribosome. This chain is Large ribosomal subunit protein uL22, found in Acetivibrio thermocellus (strain ATCC 27405 / DSM 1237 / JCM 9322 / NBRC 103400 / NCIMB 10682 / NRRL B-4536 / VPI 7372) (Clostridium thermocellum).